We begin with the raw amino-acid sequence, 315 residues long: Tetratricopeptide repeat protein 23-like (315 aa).

Residues 28–56 form a disordered region; the sequence is KIPEHQRTDESSPTSGSEESEEDTKAKEK. Coiled-coil stretches lie at residues 65 to 90, 179 to 200, and 250 to 280; these read REKL…ANKE, REAY…ESYK, and SELV…HQAH.

It is found in the cytoplasm. The protein localises to the cytoskeleton. It localises to the microtubule organizing center. The protein resides in the centrosome. Its subcellular location is the spindle. It is found in the midbody. The polypeptide is Tetratricopeptide repeat protein 23-like (TTC23L) (Bos taurus (Bovine)).